Consider the following 269-residue polypeptide: Phosphatidylglycerol--prolipoprotein diacylglyceryl transferase (269 aa).

7 consecutive transmembrane segments (helical) span residues 10 to 30 (IAVS…LIGF), 56 to 76 (AIFY…ILFY), 91 to 111 (IWEG…AMFF), 126 to 146 (FLAP…FIGG), 172 to 192 (PSQL…LWFF), 200 to 220 (YCVS…VEFV), and 237 to 257 (EGQL…MAGL). An a 1,2-diacyl-sn-glycero-3-phospho-(1'-sn-glycerol)-binding site is contributed by Arg-139.

The protein belongs to the Lgt family.

Its subcellular location is the cell inner membrane. The catalysed reaction is L-cysteinyl-[prolipoprotein] + a 1,2-diacyl-sn-glycero-3-phospho-(1'-sn-glycerol) = an S-1,2-diacyl-sn-glyceryl-L-cysteinyl-[prolipoprotein] + sn-glycerol 1-phosphate + H(+). It functions in the pathway protein modification; lipoprotein biosynthesis (diacylglyceryl transfer). Its function is as follows. Catalyzes the transfer of the diacylglyceryl group from phosphatidylglycerol to the sulfhydryl group of the N-terminal cysteine of a prolipoprotein, the first step in the formation of mature lipoproteins. In Marinomonas sp. (strain MWYL1), this protein is Phosphatidylglycerol--prolipoprotein diacylglyceryl transferase.